The sequence spans 284 residues: MLSKQIPLGIYEKALPAGECWLERLRLAKTLGFDFVEMSVDETNERLSRLDWSREQRLALVNAIVETGVRVPSMCLSAHRRFPLGSEDDAVRAQGLEIMRKAIQFAQDVGIRVIQLAGYDVYYQEANNETRRRFRDGLKESVEMASRAQVTLAMEIMDYPLMNSISKALGYAHYLNNPWFQLYPDIGNLSAWDNDVQMELQAGIGHIVAVHVKDTKPGVFKNVPFGEGVVDFERCFETLKQSGYCGPYLIEMWSETAEDPAAEVVKACDWVKARMAKAGMVEAA.

It belongs to the L-ribulose-5-phosphate 3-epimerase family.

The enzyme catalyses L-ribulose 5-phosphate = L-xylulose 5-phosphate. It participates in cofactor degradation; L-ascorbate degradation; D-xylulose 5-phosphate from L-ascorbate: step 3/4. Catalyzes the isomerization of L-xylulose-5-phosphate to L-ribulose-5-phosphate. Is involved in the anaerobic L-ascorbate utilization. The chain is L-ribulose-5-phosphate 3-epimerase UlaE from Shigella flexneri.